Consider the following 122-residue polypeptide: Large ribosomal subunit protein uL14 (122 aa).

The protein belongs to the universal ribosomal protein uL14 family. In terms of assembly, part of the 50S ribosomal subunit. Forms a cluster with proteins L3 and L19. In the 70S ribosome, L14 and L19 interact and together make contacts with the 16S rRNA in bridges B5 and B8.

Its function is as follows. Binds to 23S rRNA. Forms part of two intersubunit bridges in the 70S ribosome. In Clostridium tetani (strain Massachusetts / E88), this protein is Large ribosomal subunit protein uL14.